Consider the following 1077-residue polypeptide: Response regulator SSK1 (1077 aa).

The 147-residue stretch at 854–1000 (NVLIVEDNII…FLERKVMEWG (147 aa)) folds into the Response regulatory domain. At aspartate 903 the chain carries 4-aspartylphosphate.

It belongs to the SSK1 family.

The protein resides in the cytoplasm. Its function is as follows. Two-domain response regulator protein in the two-component signal transduction system of the HOG1 pathway. Involved in multi-stress responses and is essential for conidiation, secondary metabolism, autophagy and endocyrosis. In addition, regulates mycelial growth, cell nucleus development, septum formation, and organelle development. Also regulates trap formation and thus plays a crucial role in pathogenicity. This Arthrobotrys oligospora (strain ATCC 24927 / CBS 115.81 / DSM 1491) (Nematode-trapping fungus) protein is Response regulator SSK1.